Consider the following 621-residue polypeptide: MVGASRTILSLSLSSSLFTFSKIPHVFPFLRLHKPRFHHAFRPLYSAAATTSSPTTETNVTDPDQLKHTILLERLRLRHLKESAKPPQQRPSSVVGVEEESSIRKKSKKLVENFQELGLSEEVMGALQELNIEVPTEIQCIGIPAVMERKSVVLGSHTGSGKTLAYLLPIVQLMREDEANLGKKTKPRRPRTVVLCPTRELSEQVYRVAKSISHHARFRSILVSGGSRIRPQEDSLNNAIDMVVGTPGRILQHIEEGNMVYGDIAYLVLDEADTMFDRGFGPEIRKFLAPLNQRALKTNDQGFQTVLVTATMTMAVQKLVDEEFQGIEHLRTSTLHKKIANARHDFIKLSGGEDKLEALLQVLEPSLAKGSKVMVFCNTLNSSRAVDHYLSENQISTVNYHGEVPAEQRVENLKKFKDEEGDCPTLVCTDLAARGLDLDVDHVVMFDFPKNSIDYLHRTGRTARMGAKGKVTSLVSRKDQMLAARIEEAMRNNESLESLTTDNVRRDAARTHITQEKGRSVKQIREVSKQRNSRDKPSSSSPPARSTGGKTPVRKSSSSSFSKPRKASSPPEKSSKPKRKILKTVGSRSIAARGKTGSDRRPGKKLSVVGFRGKSSSARAS.

The Q motif signature appears at 112 to 140 (ENFQELGLSEEVMGALQELNIEVPTEIQC). The 188-residue stretch at 143 to 330 (IPAVMERKSV…DEEFQGIEHL (188 aa)) folds into the Helicase ATP-binding domain. 156–163 (SHTGSGKT) is an ATP binding site. Residues 270 to 273 (DEAD) carry the DEAD box motif. One can recognise a Helicase C-terminal domain in the interval 355-505 (KLEALLQVLE…LESLTTDNVR (151 aa)). A disordered region spans residues 497-621 (ESLTTDNVRR…RGKSSSARAS (125 aa)). Residues 503–537 (NVRRDAARTHITQEKGRSVKQIREVSKQRNSRDKP) show a composition bias toward basic and acidic residues. Residues 555–572 (KSSSSSFSKPRKASSPPE) show a composition bias toward low complexity.

It belongs to the DEAD box helicase family.

The enzyme catalyses ATP + H2O = ADP + phosphate + H(+). This chain is DEAD-box ATP-dependent RNA helicase 39 (RH39), found in Arabidopsis thaliana (Mouse-ear cress).